The sequence spans 357 residues: DENN domain-containing protein 10 (357 aa).

Residues 1-136 enclose the uDENN domain; it reads MAAVVAMDTQ…IAVLTKGICQ (136 aa). The region spanning 152-299 is the cDENN domain; that stretch reads KAYLAGSIKD…PEKSDSQVIQ (148 aa). Positions 301–357 constitute a dDENN domain; it reads IALKTKEIFTHLAPFSEVSDDGGKVILNVEALKQQRFPPATENFLYHLAAAEQMLKV.

Belongs to the DENND10 family. As to quaternary structure, interacts with the coiled-coil heterodimer of CCDC22 and CCDC93; the interaction is direct. Interacts with RAB27A and RAB27B (GDP-bound forms preferentially).

The protein resides in the late endosome. Guanine nucleotide exchange factor (GEF) regulating homeostasis of late endocytic pathway, including endosomal positioning, maturation and secretion, possibly through activating Rab proteins such as RAB27A and RAB27B. Promotes the exchange of GDP to GTP, converting inactive GDP-bound RAB27A and RAB27B into their active GTP-bound form. The chain is DENN domain-containing protein 10 from Mus musculus (Mouse).